The following is a 204-amino-acid chain: Thymidylate kinase (204 aa).

11–18 (GLDKSGKT) lines the ATP pocket.

The protein belongs to the thymidylate kinase family.

The enzyme catalyses dTMP + ATP = dTDP + ADP. Its pathway is pyrimidine metabolism; dTTP biosynthesis. This is Thymidylate kinase (TMK) from Ectromelia virus (strain Moscow) (ECTV).